The chain runs to 223 residues: MTSNQLAQYIDHTALTAEKNEQDISTLCNEAIEHGFYSVCINSAYIPLAKEKLAGSNVKICTVVGFPLGANLTSVKAFETQESIKAGANEIDMVINVGWIKSQKWDEVKQDIQAVFNACNGTPLKVILETCLLTKDEIVKACEICKEIGVAFVKTSTGFNKGGATVEDVALMKNTVGNIGVKASGGVRDTETALAMIKAGATRIGASAGIAIISGTQDTQSTY.

Asp92 (proton donor/acceptor) is an active-site residue. The active-site Schiff-base intermediate with acetaldehyde is the Lys154. Catalysis depends on Lys182, which acts as the Proton donor/acceptor.

It belongs to the DeoC/FbaB aldolase family. DeoC type 1 subfamily.

It is found in the cytoplasm. The catalysed reaction is 2-deoxy-D-ribose 5-phosphate = D-glyceraldehyde 3-phosphate + acetaldehyde. It participates in carbohydrate degradation; 2-deoxy-D-ribose 1-phosphate degradation; D-glyceraldehyde 3-phosphate and acetaldehyde from 2-deoxy-alpha-D-ribose 1-phosphate: step 2/2. In terms of biological role, catalyzes a reversible aldol reaction between acetaldehyde and D-glyceraldehyde 3-phosphate to generate 2-deoxy-D-ribose 5-phosphate. This is Deoxyribose-phosphate aldolase from Haemophilus influenzae (strain ATCC 51907 / DSM 11121 / KW20 / Rd).